The sequence spans 449 residues: Biotin carboxylase (449 aa).

Positions 4–448 (MIEKVLIANR…NIHYLEKMLG (445 aa)) constitute a Biotin carboxylation domain. Residues lysine 119, lysine 162, 168–169 (GG), 204–207 (EKYL), histidine 212, and histidine 239 each bind ATP. Residues 123–320 (IAAMKAAGVP…IVKEQILIAA (198 aa)) enclose the ATP-grasp domain. Lysine 241 contributes to the hydrogencarbonate binding site. Glutamate 279 and glutamate 291 together coordinate ATP. Positions 279, 291, and 293 each coordinate Mg(2+). Positions 279, 291, and 293 each coordinate Mn(2+). The hydrogencarbonate site is built by arginine 295, valine 298, and arginine 341. Arginine 295 is a catalytic residue. Residue arginine 341 participates in biotin binding.

In terms of assembly, acetyl-CoA carboxylase is a heterohexamer of biotin carboxyl carrier protein, biotin carboxylase and the two subunits of carboxyl transferase in a 2:2 complex. Mg(2+) serves as cofactor. Requires Mn(2+) as cofactor.

The enzyme catalyses N(6)-biotinyl-L-lysyl-[protein] + hydrogencarbonate + ATP = N(6)-carboxybiotinyl-L-lysyl-[protein] + ADP + phosphate + H(+). Its pathway is lipid metabolism; malonyl-CoA biosynthesis; malonyl-CoA from acetyl-CoA: step 1/1. This protein is a component of the acetyl coenzyme A carboxylase complex; first, biotin carboxylase catalyzes the carboxylation of the carrier protein and then the transcarboxylase transfers the carboxyl group to form malonyl-CoA. In Allochromatium vinosum (strain ATCC 17899 / DSM 180 / NBRC 103801 / NCIMB 10441 / D) (Chromatium vinosum), this protein is Biotin carboxylase (accC).